Here is a 377-residue protein sequence, read N- to C-terminus: MSATLDLARELIRRDSVTPRDEGCQALMIERLEAIGFKVEKMRHGDVDNFWARRGDAGPLFCFAGHTDVVPTGPLDKWDSPPFEPTVRNGLLYGRGAADMKASLAAFVTACERFVAEHPDHKGSLALLITSDEEGVAVDGTVKVVDALEARGETIDYCIVGEPTSEQRLGDTVKNGRRGSLSGRLVVHGIQGHIAYPQLAKNPIHLMAPALAELAATRWDEGNAFFPPTSWQVSNIQAGTGATNVIPGHCELLFNFRFSPESTAESLKERVYQILDKHGLGYELHWQLSGQPFITPPGALTDALSAAIAEVSGAKAELSTTGGTSDGRFIKRIARELVEFGPINATIHKLNECVEVADVEPLAAIYRRTLEGLLAKA.

A Zn(2+)-binding site is contributed by His-66. Asp-68 is a catalytic residue. Residue Asp-99 coordinates Zn(2+). Residue Glu-133 is the Proton acceptor of the active site. Zn(2+) contacts are provided by Glu-134, Glu-162, and His-348.

It belongs to the peptidase M20A family. DapE subfamily. Homodimer. Zn(2+) is required as a cofactor. It depends on Co(2+) as a cofactor.

It carries out the reaction N-succinyl-(2S,6S)-2,6-diaminopimelate + H2O = (2S,6S)-2,6-diaminopimelate + succinate. It participates in amino-acid biosynthesis; L-lysine biosynthesis via DAP pathway; LL-2,6-diaminopimelate from (S)-tetrahydrodipicolinate (succinylase route): step 3/3. In terms of biological role, catalyzes the hydrolysis of N-succinyl-L,L-diaminopimelic acid (SDAP), forming succinate and LL-2,6-diaminopimelate (DAP), an intermediate involved in the bacterial biosynthesis of lysine and meso-diaminopimelic acid, an essential component of bacterial cell walls. This Chromobacterium violaceum (strain ATCC 12472 / DSM 30191 / JCM 1249 / CCUG 213 / NBRC 12614 / NCIMB 9131 / NCTC 9757 / MK) protein is Succinyl-diaminopimelate desuccinylase.